The sequence spans 384 residues: F-box A protein 224 (384 aa).

Residues 71–122 (PKSLSDFPIGVMYDVLGHVDPFERLVLRKVSRNLRDVVQKMRCELDALYVNK) enclose the F-box domain.

Belongs to the FTH family.

This chain is F-box A protein 224 (fbxa-224), found in Caenorhabditis elegans.